A 290-amino-acid chain; its full sequence is ATP synthase gamma chain (290 aa).

Belongs to the ATPase gamma chain family. F-type ATPases have 2 components, CF(1) - the catalytic core - and CF(0) - the membrane proton channel. CF(1) has five subunits: alpha(3), beta(3), gamma(1), delta(1), epsilon(1). CF(0) has three main subunits: a, b and c.

The protein localises to the cell inner membrane. Functionally, produces ATP from ADP in the presence of a proton gradient across the membrane. The gamma chain is believed to be important in regulating ATPase activity and the flow of protons through the CF(0) complex. The sequence is that of ATP synthase gamma chain from Erythrobacter litoralis (strain HTCC2594).